The chain runs to 261 residues: Early E1A protein (261 aa).

The tract at residues 43-51 (PTLHDLYDL) is interaction with RB1 in competition with E2F1. Residues 78-149 (EGLDINPPPE…VNEGVKAASD (72 aa)) are interaction with UBE2I. Positions 106–110 (PDLGA) match the PXLXP motif, interaction with host ZMYND11 motif. The LXCXE motif, interaction with host RB1 and TMEM173/STING signature appears at 115–119 (LRCYE). A zinc finger spans residues 163-183 (CKSCEFHRNNTGMKELLCSLC). A disordered region spans residues 197–261 (SDDESPSPDS…DLSTRKLPRQ (65 aa)). A compositionally biased stretch (low complexity) spans 203 to 212 (SPDSTTSPPE). The short motif at 250-254 (PLDLS) is the PXDLS motif, CTBP-binding element. Residues 256 to 261 (RKLPRQ) carry the Nuclear localization signal motif.

This sequence belongs to the adenoviridae E1A protein family. Interacts with host UBE2I; this interaction interferes with polySUMOylation. Interacts with host RB1; this interaction induces the aberrant dissociation of RB1-E2F1 complex thereby disrupting the activity of RB1 and activating E2F1-regulated genes. Interacts with host ATF7; the interaction enhances ATF7-mediated viral transactivation activity which requires the zinc binding domains of both proteins. Isoform early E1A 32 kDa protein and isoform early E1A 26 kDa protein interact (via N-terminus) with CUL1 and E3 ubiquitin ligase RBX1; these interactions inhibit RBX1-CUL1-dependent elongation reaction of ubiquitin chains and attenuate ubiquitination of SCF(FBXW7) target proteins. Interacts (via PXLXP motif) with host ZMYND11/BS69 (via MYND-type zinc finger); this interaction inhibits E1A mediated transactivation. Interacts with host EP300; this interaction stimulates the acetylation of RB1 by recruiting EP300 and RB1 into a multimeric-protein complex. Interacts with host CTBP1 and CTBP2; this interaction seems to potentiate viral replication. Interacts with host DCAF7. Interacts with host DYRK1A. Interacts with host KPNA4; this interaction allows E1A import into the host nucleus. Interacts with host EP400; this interaction stabilizes MYC. Interacts with host TBP protein; this interaction probably disrupts the TBP-TATA complex. Interacts (via LXCXE motif) with host TMEM173/STING; this interaction impairs the ability of TMEM173/STING to sense cytosolic DNA and promote the production of type I interferon (IFN-alpha and IFN-beta). Interacts (via C-terminus) with host ZBED1/hDREF (via C-terminus); the interaction is direct.

It localises to the host nucleus. In terms of biological role, plays a role in viral genome replication by driving entry of quiescent cells into the cell cycle. Stimulation of progression from G1 to S phase allows the virus to efficiently use the cellular DNA replicating machinery to achieve viral genome replication. E1A protein has both transforming and trans-activating activities. Induces the disassembly of the E2F1 transcription factor from RB1 by direct competition for the same binding site on RB1, with subsequent transcriptional activation of E2F1-regulated S-phase genes and of the E2 region of the adenoviral genome. Release of E2F1 leads to the ARF-mediated inhibition of MDM2 and causes TP53/p53 to accumulate because it is not targeted for degradation by MDM2-mediated ubiquitination anymore. This increase in TP53, in turn, would arrest the cell proliferation and direct its death but this effect is counteracted by the viral protein E1B-55K. Inactivation of the ability of RB1 to arrest the cell cycle is critical for cellular transformation, uncontrolled cellular growth and proliferation induced by viral infection. Interaction with RBX1 and CUL1 inhibits ubiquitination of the proteins targeted by SCF(FBXW7) ubiquitin ligase complex, and may be linked to unregulated host cell proliferation. The tumorigenesis-restraining activity of E1A may be related to the disruption of the host CtBP-CtIP complex through the CtBP binding motif. Interaction with host TMEM173/STING impairs the ability of TMEM173/STING to sense cytosolic DNA and promote the production of type I interferon (IFN-alpha and IFN-beta). Promotes the sumoylation of host ZBED1/hDREF with SUMO1. This Human adenovirus B serotype 7 (HAdV-7) protein is Early E1A protein.